The chain runs to 147 residues: Hemoglobin subunit beta (147 aa).

V2 bears the N-acetylvaline mark. The region spanning 3–147 (HLTAEEKSAV…VANALAHKYH (145 aa)) is the Globin domain. At T13 the chain carries Phosphothreonine. Position 45 is a phosphoserine (S45). K60 is subject to N6-acetyllysine. Residue H64 participates in heme b binding. K83 carries the N6-acetyllysine modification. H93 lines the heme b pocket. C94 is modified (S-nitrosocysteine). The residue at position 145 (K145) is an N6-acetyllysine.

This sequence belongs to the globin family. In terms of assembly, heterotetramer of two alpha chains and two beta chains. As to expression, red blood cells.

Its function is as follows. Involved in oxygen transport from the lung to the various peripheral tissues. This chain is Hemoglobin subunit beta (HBB), found in Sapajus apella (Brown-capped capuchin).